The primary structure comprises 381 residues: tRNA (guanine(26)-N(2))-dimethyltransferase (381 aa).

In terms of domain architecture, Trm1 methyltransferase spans 7-378 (IEVQEGKAKI…APYEVFIETI (372 aa)). Residues Arg-39, Arg-64, Asp-81, Asp-123, and Ala-124 each coordinate S-adenosyl-L-methionine.

The protein belongs to the class I-like SAM-binding methyltransferase superfamily. Trm1 family.

It catalyses the reaction guanosine(26) in tRNA + 2 S-adenosyl-L-methionine = N(2)-dimethylguanosine(26) in tRNA + 2 S-adenosyl-L-homocysteine + 2 H(+). Functionally, dimethylates a single guanine residue at position 26 of a number of tRNAs using S-adenosyl-L-methionine as donor of the methyl groups. This is tRNA (guanine(26)-N(2))-dimethyltransferase from Pyrococcus horikoshii (strain ATCC 700860 / DSM 12428 / JCM 9974 / NBRC 100139 / OT-3).